The chain runs to 486 residues: Arginine deiminase (486 aa).

Cys476 acts as the Amidino-cysteine intermediate in catalysis.

The protein belongs to the arginine deiminase family.

It localises to the cytoplasm. The catalysed reaction is L-arginine + H2O = L-citrulline + NH4(+). The protein operates within amino-acid degradation; L-arginine degradation via ADI pathway; carbamoyl phosphate from L-arginine: step 1/2. In terms of biological role, involved in the arginine deiminase pathway of fermentative arginine utilization. The chain is Arginine deiminase (arcA) from Halobacterium salinarum (strain ATCC 29341 / DSM 671 / R1).